The following is a 120-amino-acid chain: MSYRKLGRTSAQRKAMLRDLTTDLIINERIETTETRAKELRSVVEKMITLGKRGDLHARRQAAAYIRNEVANEENNQDALQKLFSDIATRYEERQGGYTRIMKLGPRRGDGAPMAIIELV.

It belongs to the bacterial ribosomal protein bL17 family. As to quaternary structure, part of the 50S ribosomal subunit. Contacts protein L32.

This is Large ribosomal subunit protein bL17 from Bacillus subtilis (strain 168).